The sequence spans 196 residues: Lipoprotein signal peptidase (196 aa).

Transmembrane regions (helical) follow at residues 43-63, 75-95, and 97-117; these read LMLK…GISF, AIFL…MICS, and TIGS…NLID. Residues aspartate 126 and aspartate 144 contribute to the active site. A helical membrane pass occupies residues 135–155; sequence YSFPVFNLADCFITLGVIILI.

This sequence belongs to the peptidase A8 family.

Its subcellular location is the cell inner membrane. The catalysed reaction is Release of signal peptides from bacterial membrane prolipoproteins. Hydrolyzes -Xaa-Yaa-Zaa-|-(S,diacylglyceryl)Cys-, in which Xaa is hydrophobic (preferably Leu), and Yaa (Ala or Ser) and Zaa (Gly or Ala) have small, neutral side chains.. It participates in protein modification; lipoprotein biosynthesis (signal peptide cleavage). In terms of biological role, this protein specifically catalyzes the removal of signal peptides from prolipoproteins. The protein is Lipoprotein signal peptidase of Rickettsia typhi (strain ATCC VR-144 / Wilmington).